Consider the following 81-residue polypeptide: Elicitor peptide 4 (81 aa).

Positions 1–54 (MERGVSYYLWIPFKFIHQTFGSLLLKLLGLRSPSDHSFPEDGEEEVKVVEVSSR) are excised as a propeptide. Residues 57–81 (PGKKNVLKKSRESSGKPGGTNKKPF) form a disordered region.

Belongs to the brassicaceae elicitor peptide family.

In terms of biological role, elicitor of plant defense. The protein is Elicitor peptide 4 (PEP4) of Arabidopsis thaliana (Mouse-ear cress).